The primary structure comprises 85 residues: U4-theraphotoxin-Hhn1l (85 aa).

A signal peptide spans 1–22 (MKVTLIAFLTCAAVLVLHTTAA). A propeptide spanning residues 23-48 (EELEAESQLMGVGMPDTELAAVDEER) is cleaved from the precursor. Cystine bridges form between Cys52–Cys66, Cys56–Cys77, and Cys71–Cys82.

This sequence belongs to the neurotoxin 12 (Hwtx-2) family. 02 (Hwtx-2) subfamily. Expressed by the venom gland.

It is found in the secreted. In terms of biological role, postsynaptic neurotoxin. This chain is U4-theraphotoxin-Hhn1l, found in Cyriopagopus hainanus (Chinese bird spider).